The sequence spans 5068 residues: Protein piccolo (5068 aa).

Residues 1–20 (MGNEASLEGEGLPEGLAAAA) are compositionally biased toward low complexity. 2 disordered regions span residues 1 to 143 (MGNE…DFKE) and 173 to 524 (FDLI…QAPA). Pro residues predominate over residues 93-102 (PGKPPDPGRP). 3 stretches are compositionally biased toward basic and acidic residues: residues 111-122 (RTTDTFRSEQKL), 133-143 (KESKSRTDFKE), and 185-199 (ETTKKQKVAQKDQGK). S212 bears the Phosphoserine mark. The segment covering 232-241 (PSKSVSSQQA) has biased composition (polar residues). Low complexity predominate over residues 252-279 (AKPSQQSPAQTPAQQAKPVAQQPGPAKA). The segment covering 319–334 (TSLQQPGPKSLAQTPG) has biased composition (polar residues). Composition is skewed to pro residues over residues 391–407 (PTKPSPQQPIPAKPQPQ) and 416–487 (PQQP…PQPQ). The 10 X 10 AA tandem approximate repeats of P-A-K-P-Q-P-Q-Q-P-X stretch occupies residues 401-500 (PAKPQPQQPV…LGKPSAQQPS (100 aa)). Residues 495–508 (SAQQPSKSISQTVT) show a composition bias toward polar residues. Over residues 515-524 (PPTSAAQAPA) the composition is skewed to low complexity. The segment at 532-556 (CPLCNTTELLLHTPEKANFNTCTEC) adopts a C4-type zinc-finger fold. Disordered stretches follow at residues 594 to 867 (AAIP…TVTG), 883 to 1005 (LIST…TELN), 1057 to 1345 (LGDM…PSDL), and 1364 to 1803 (VGEK…SDPE). The span at 610 to 625 (QPATASKSPVPSQQAS) shows a compositional bias: polar residues. The segment covering 626–644 (PKKELPSKQDSPKAPESKK) has biased composition (basic and acidic residues). Low complexity predominate over residues 709 to 738 (SPSSAAATSKPAILSSQVQAQAQVTTAPPL). Over residues 782–795 (ESKDPVQKKEEPKK) the composition is skewed to basic and acidic residues. Low complexity predominate over residues 809–830 (VPKGSPTPSGTRPTTGQATPQS). Residues S844 and S856 each carry the phosphoserine modification. 2 stretches are compositionally biased toward polar residues: residues 856-865 (SQPTTPQETV) and 883-893 (LISTAGQQAPH). T860 carries the post-translational modification Phosphothreonine. A C4-type zinc finger spans residues 997 to 1020 (CPLCRTELNVGSQDPPNFNTCTEC). Residues 1073-1085 (SPVPAPAEPPPQK) are compositionally biased toward pro residues. The span at 1097-1116 (KETEVKAETEKQIPEKETPS) shows a compositional bias: basic and acidic residues. Phosphothreonine is present on T1120. 4 stretches are compositionally biased toward basic and acidic residues: residues 1144-1165 (PEKKPSEEEKALPADKKEKKPP), 1172-1186 (LEEKKPIPDDQKLPP), 1244-1253 (PKDRQKESRD), and 1262-1283 (TAKEGRGEPSKDRTEKEEDKSD). Positions 1290-1306 (PKSPQGLSDTGYSSDGI) are enriched in polar residues. A phosphoserine mark is found at S1292, S1302, S1303, S1332, S1334, S1337, S1338, and S1341. Residues 1319 to 1333 (SDEKDLLKGLKKDSF) show a composition bias toward basic and acidic residues. Residues 1334 to 1343 (SQESSPSSPS) show a composition bias toward low complexity. Positions 1374–1392 (PQKVSPEQPQDQQKTQTPS) are enriched in polar residues. Over residues 1405-1444 (KESQEKKVTSKKDSAQGFPSRKEHKENPELVDDLSPRRAS) the composition is skewed to basic and acidic residues. Phosphoserine occurs at positions 1439, 1451, 1452, 1454, 1457, 1481, 1484, 1505, and 1507. Residues 1499-1511 (SADEDASGSEDEE) show a composition bias toward acidic residues. A Phosphothreonine modification is found at T1552. S1553, S1563, and S1575 each carry phosphoserine. A compositionally biased stretch (acidic residues) spans 1566–1575 (DEDDETFDES). Over residues 1576–1587 (PELKFRETKSQE) the composition is skewed to basic and acidic residues. A compositionally biased stretch (polar residues) spans 1606–1624 (ELNSTVTDKYSAESSQKKT). The segment covering 1628-1638 (FDEEPELEMES) has biased composition (acidic residues). S1638 bears the Phosphoserine mark. At T1640 the chain carries Phosphothreonine. 2 positions are modified to phosphoserine: S1642 and S1647. Positions 1650-1667 (EGSSSLHASSFTPGTSPT) are enriched in polar residues. Residues 1707–1720 (DSSEEEELREEEEL) show a composition bias toward acidic residues. 2 positions are modified to phosphoserine: S1708 and S1709. A compositionally biased stretch (basic and acidic residues) spans 1721–1734 (LKEQEKQRELEQQQ). At T1760 the chain carries Phosphothreonine. S1766 carries the post-translational modification Phosphoserine. Residues 1775 to 1790 (EELRQAAEMEELHRSS) show a composition bias toward basic and acidic residues. Phosphoserine occurs at positions 1795, 1800, 1808, and 1829. 2 disordered regions span residues 2104-2126 (PSESATSVPPSDTPSLTSSISSV) and 2261-2377 (EAEL…AAAA). Residues 2109–2126 (TSVPPSDTPSLTSSISSV) are compositionally biased toward low complexity. The span at 2277-2291 (TPSSQTKEQPGSPHS) shows a compositional bias: polar residues. Residues 2334–2368 (QPPPPPPPPPPPPPPPPPPPPPPLPPATSPKPPTY) show a composition bias toward pro residues. At S2495 the chain carries Phosphoserine. A glycan (O-linked (GlcNAc) threonine) is linked at T2686. Residue S2960 is glycosylated (O-linked (GlcNAc) serine). T2998 carries the post-translational modification Phosphothreonine. 2 disordered regions span residues 3334-3443 (KEEK…SKVS) and 3490-3556 (KGGS…LYSP). S3358 carries the post-translational modification Phosphoserine. Basic and acidic residues predominate over residues 3361–3370 (DDPRNLKKIV). Residue S3372 is modified to Phosphoserine. 2 positions are modified to phosphothreonine: T3376 and T3403. Residues 3403–3412 (TDDEDQDEWD) are compositionally biased toward acidic residues. Polar residues predominate over residues 3495–3507 (GCQTETDPDTQSP). Phosphoserine occurs at positions 3506, 3514, 3545, 3549, 3555, 3558, 3561, 3582, 3608, 3610, and 3616. Disordered stretches follow at residues 3576-3679 (PLPD…RRRM) and 3760-3797 (DYMSDSEVSSTRPSRVESQHGIERPRTAPQTEFSQFIP). Composition is skewed to polar residues over residues 3636–3645 (KGSQTTSGTQ) and 3661–3673 (STGTQSTYSTMGT). At S3763 the chain carries Phosphoserine. The span at 3773–3785 (SRVESQHGIERPR) shows a compositional bias: basic and acidic residues. Positions 3787–3797 (APQTEFSQFIP) are enriched in polar residues. S4016, S4042, and S4132 each carry phosphoserine. 2 disordered regions span residues 4207–4231 (ADKPYSSGSRSRPSSRPSSVYGLDL) and 4254–4273 (VSFGHSSSSARTKPTSLPIS). Residues 4210-4231 (PYSSGSRSRPSSRPSSVYGLDL) are compositionally biased toward low complexity. A compositionally biased stretch (polar residues) spans 4257–4273 (GHSSSSARTKPTSLPIS). Phosphoserine occurs at positions 4286, 4290, 4293, 4322, and 4358. Residues 4317–4339 (RDQFGSSHSLPEVQQHMREESRT) are disordered. The PDZ domain maps to 4424–4518 (RIKITRDSKD…EAEICVRLDL (95 aa)). The interval 4574 to 4620 (KGAHAHSGPTSAGSSSVPSPGQPGSPSVSKKKHGGSKPTDVSKTASH) is disordered. The span at 4578 to 4601 (AHSGPTSAGSSSVPSPGQPGSPSV) shows a compositional bias: low complexity. Phosphoserine is present on S4592. The C2 1 domain maps to 4622–4751 (ITGEIQLQIN…SHLDNTPRWY (130 aa)). Ca(2+)-binding residues include D4651 and D4657. S4706 carries the phosphoserine modification. Positions 4721, 4723, 4726, and 4729 each coordinate Ca(2+). Disordered regions lie at residues 4758–4834 (ESIE…SVAQ) and 4857–4891 (QPTKPTNHRPAETSVSTGSSGSSVGSGYSVDSEGS). 2 stretches are compositionally biased toward low complexity: residues 4766–4778 (HSSQNSQQSPKPS) and 4805–4815 (SSPGSSKSSSE). Over residues 4823–4834 (PSRSQSKTSVAQ) the composition is skewed to polar residues. Residues 4870-4891 (SVSTGSSGSSVGSGYSVDSEGS) show a composition bias toward low complexity. In terms of domain architecture, C2 2 spans 4933–5058 (VMGEIKLALK…DLRKRIVNWH (126 aa)).

In terms of assembly, interacts with BSN, ERC2/CAST1, RIMS1 and UNC13A. Interacts (via C-terminus) with TRIO (via N-terminus). Interacts with CTBP1. Interacts with SIAH1; this interaction negatively regulates SIAH1 E3 ligase activity. Directly interacts with GIT1 and GIT2. It depends on Ca(2+) as a cofactor. As to expression, highly expressed in brain. Moderately expressed in pituitary gland and pancreatic islets. Low levels found in stomach.

It is found in the presynaptic active zone. In terms of biological role, scaffold protein of the presynaptic cytomatrix at the active zone (CAZ) which is the place in the synapse where neurotransmitter is released. After synthesis, participates in the formation of Golgi-derived membranous organelles termed Piccolo-Bassoon transport vesicles (PTVs) that are transported along axons to sites of nascent synaptic contacts. At the presynaptic active zone, regulates the spatial organization of synaptic vesicle cluster, the protein complexes that execute membrane fusion and compensatory endocytosis. Organizes as well the readily releasable pool of synaptic vesicles and safeguards a fraction of them to be not immediately available for action potential-induced release. Also functions in processes other than assembly such as the regulation of specific presynaptic protein ubiquitination by interacting with SIAH1 or the regulation of presynaptic autophagy. Also mediates synapse to nucleus communication leading to reconfiguration of gene expression by associating with the transcriptional corepressor CTBP1 and by subsequently reducing the size of its pool available for nuclear import. The chain is Protein piccolo from Mus musculus (Mouse).